We begin with the raw amino-acid sequence, 598 residues long: uncharacterized protein (598 aa).

Residue S46 is modified to Phosphoserine. Positions 106 to 441 (LQNHLKTGPF…ADYISLSYSG (336 aa)) constitute an SAC domain. 2 helical membrane-spanning segments follow: residues 508–528 (TIRC…MTLF) and 535–555 (ILPP…SLYY).

The protein localises to the endoplasmic reticulum membrane. This is an uncharacterized protein from Schizosaccharomyces pombe (strain 972 / ATCC 24843) (Fission yeast).